We begin with the raw amino-acid sequence, 869 residues long: Leucine--tRNA ligase (869 aa).

The 'HIGH' region motif lies at 42-52 (PYPSGKLHMGH). Positions 624–628 (TMSKS) match the 'KMSKS' region motif. Residue K627 participates in ATP binding.

Belongs to the class-I aminoacyl-tRNA synthetase family.

It is found in the cytoplasm. It carries out the reaction tRNA(Leu) + L-leucine + ATP = L-leucyl-tRNA(Leu) + AMP + diphosphate. In Nitrosomonas europaea (strain ATCC 19718 / CIP 103999 / KCTC 2705 / NBRC 14298), this protein is Leucine--tRNA ligase.